Here is a 166-residue protein sequence, read N- to C-terminus: Small ribosomal subunit protein bS6 (166 aa).

Positions 97 to 166 (EEGPSAMMRK…EEAETATDGE (70 aa)) are disordered. Basic and acidic residues predominate over residues 105 to 159 (RKADRDRERDDRGGGFRGEREGGFRGDREGGFRGGDRDGGGFRGDRGPRRPREEA).

It belongs to the bacterial ribosomal protein bS6 family.

In terms of biological role, binds together with bS18 to 16S ribosomal RNA. The polypeptide is Small ribosomal subunit protein bS6 (Bradyrhizobium diazoefficiens (strain JCM 10833 / BCRC 13528 / IAM 13628 / NBRC 14792 / USDA 110)).